Consider the following 830-residue polypeptide: Scavenger receptor class F member 1 (830 aa).

The N-terminal stretch at Met-1 to Gly-19 is a signal peptide. At Ser-20–Thr-421 the chain is on the extracellular side. EGF-like domains follow at residues Thr-53–Ser-87, Trp-95–Glu-130, Trp-155–Ser-191, and Trp-215–Glu-249. Disulfide bonds link Cys-57/Cys-69, Cys-63/Cys-75, Cys-77/Cys-86, Cys-99/Cys-111, Cys-105/Cys-118, Cys-120/Cys-129, Cys-159/Cys-172, Cys-165/Cys-179, Cys-181/Cys-190, Cys-219/Cys-230, Cys-225/Cys-237, and Cys-239/Cys-248. N-linked (GlcNAc...) asparagine glycosylation is present at Asn-289. EGF-like domains are found at residues Phe-302–Glu-339 and Cys-351–Asn-382. 6 disulfides stabilise this stretch: Cys-306-Cys-319, Cys-313-Cys-326, Cys-329-Cys-338, Cys-355-Cys-363, Cys-358-Cys-370, and Cys-372-Cys-381. N-linked (GlcNAc...) asparagine glycans are attached at residues Asn-382 and Asn-393. The helical transmembrane segment at Ala-422 to Ala-442 threads the bilayer. The Cytoplasmic segment spans residues Cys-443–Pro-830. 3 disordered regions span residues Gly-516–Cys-539, Ser-581–Val-688, and Phe-715–Pro-830. A phosphoserine mark is found at Ser-589 and Ser-606. Residues Glu-634–Ala-643 show a composition bias toward acidic residues. Positions Pro-644–Pro-653 are enriched in low complexity.

Heterophilic interaction with SREC2 via its extracellular domain. The heterophilic interaction is suppressed by the presence of ligand such as Ac-LDL. Interacts with AVIL. As to expression, endothelial cells.

It localises to the membrane. Mediates the binding and degradation of acetylated low density lipoprotein (Ac-LDL). Mediates heterophilic interactions, suggesting a function as adhesion protein. Plays a role in the regulation of neurite-like outgrowth. This chain is Scavenger receptor class F member 1 (SCARF1), found in Homo sapiens (Human).